Consider the following 364-residue polypeptide: Probable dual-specificity RNA methyltransferase RlmN (364 aa).

E107 serves as the catalytic Proton acceptor. The Radical SAM core domain maps to 113–346; sequence HNYGNSVCVT…VTIRREHGHD (234 aa). Cysteines 120 and 351 form a disulfide. [4Fe-4S] cluster-binding residues include C127, C131, and C134. S-adenosyl-L-methionine contacts are provided by residues 177 to 178, S209, 232 to 234, and N308; these read GE and SLH. The S-methylcysteine intermediate role is filled by C351.

Belongs to the radical SAM superfamily. RlmN family. Requires [4Fe-4S] cluster as cofactor.

The protein localises to the cytoplasm. The catalysed reaction is adenosine(2503) in 23S rRNA + 2 reduced [2Fe-2S]-[ferredoxin] + 2 S-adenosyl-L-methionine = 2-methyladenosine(2503) in 23S rRNA + 5'-deoxyadenosine + L-methionine + 2 oxidized [2Fe-2S]-[ferredoxin] + S-adenosyl-L-homocysteine. It catalyses the reaction adenosine(37) in tRNA + 2 reduced [2Fe-2S]-[ferredoxin] + 2 S-adenosyl-L-methionine = 2-methyladenosine(37) in tRNA + 5'-deoxyadenosine + L-methionine + 2 oxidized [2Fe-2S]-[ferredoxin] + S-adenosyl-L-homocysteine. Functionally, specifically methylates position 2 of adenine 2503 in 23S rRNA and position 2 of adenine 37 in tRNAs. This Geobacillus thermodenitrificans (strain NG80-2) protein is Probable dual-specificity RNA methyltransferase RlmN.